We begin with the raw amino-acid sequence, 248 residues long: MAGLNSLEAVKRKIQALQQQADEAEDRAQGLQRELDGERERREKAEGDVAALNRRIQLVEEELDRAQERLATALQKLEEAEKAADESERGMKVIENRAMKDEEKMEIQEMQLKEAKHIAEEADRKYEEVARKLVILEGELERAEERAEVSELKCGDLEEELKNVTNNLKSLEAASEKYSEKEDKYEEEIKLLSDKLKEAETRAEFAERTVAKLEKTIDDLEEKLAQAKEENVGLHQTLDQTLNELNCI.

Alanine 2 carries the N-acetylalanine modification. A coiled-coil region spans residues 2 to 248; the sequence is AGLNSLEAVK…DQTLNELNCI (247 aa). Phosphoserine is present on serine 6. The interval 15–47 is disordered; the sequence is QALQQQADEAEDRAQGLQRELDGERERREKAEG. Residues 33–47 show a composition bias toward basic and acidic residues; that stretch reads RELDGERERREKAEG. N6-acetyllysine is present on residues lysine 177 and lysine 215. Threonine 216 is subject to Phosphothreonine.

It belongs to the tropomyosin family. Homodimer. Heterodimer of an alpha (TPM1, TPM3 or TPM4) and a beta (TPM2) chain. In terms of tissue distribution, detected in cardiac tissue and platelets, the form found in cardiac tissue is a higher molecular weight than the form found in platelets. Expressed at higher levels in the platelets of hypertensive patients with cardiac hypertrophy than in the platelets of hypertensive patients without cardiac hypertrophy (at protein level).

Its subcellular location is the cytoplasm. The protein localises to the cytoskeleton. Its function is as follows. Binds to actin filaments in muscle and non-muscle cells. Plays a central role, in association with the troponin complex, in the calcium dependent regulation of vertebrate striated muscle contraction. Smooth muscle contraction is regulated by interaction with caldesmon. In non-muscle cells is implicated in stabilizing cytoskeleton actin filaments. Binds calcium. Plays a role in platelet biogenesis. The polypeptide is Tropomyosin alpha-4 chain (TPM4) (Homo sapiens (Human)).